The sequence spans 401 residues: Acetate kinase (401 aa).

Asn-7 contacts Mg(2+). Lys-14 contributes to the ATP binding site. Residue Arg-90 participates in substrate binding. Asp-147 (proton donor/acceptor) is an active-site residue. Residues His-207–Gly-211, Asp-282–Arg-284, and Gly-331–Asn-335 contribute to the ATP site. Glu-385 lines the Mg(2+) pocket.

This sequence belongs to the acetokinase family. As to quaternary structure, homodimer. The cofactor is Mg(2+). Mn(2+) serves as cofactor.

The protein localises to the cytoplasm. It catalyses the reaction acetate + ATP = acetyl phosphate + ADP. It participates in metabolic intermediate biosynthesis; acetyl-CoA biosynthesis; acetyl-CoA from acetate: step 1/2. Its function is as follows. Catalyzes the formation of acetyl phosphate from acetate and ATP. Can also catalyze the reverse reaction. The sequence is that of Acetate kinase from Clostridium acetobutylicum (strain ATCC 824 / DSM 792 / JCM 1419 / IAM 19013 / LMG 5710 / NBRC 13948 / NRRL B-527 / VKM B-1787 / 2291 / W).